We begin with the raw amino-acid sequence, 563 residues long: Ras and Rab interactor-like protein (563 aa).

Residues 181 to 208 (GWGTETPQQTEPETGQKYSLAPRKPTPH) form a disordered region. The segment covering 184 to 196 (TETPQQTEPETGQ) has biased composition (low complexity). The region spanning 381-518 (AQELRRLRRR…IAHYQPDTGR (138 aa)) is the VPS9 domain. The disordered stretch occupies residues 539 to 563 (TLHQQAQPTAQANQPFEEPWAIGDP). A compositionally biased stretch (low complexity) spans 542–553 (QQAQPTAQANQP).

Interacts with RAB5A, RAB22A and MUSK. Detected in thymus and spleen (at protein level). Detected in lung, liver, kidney, spleen, thymus and skeletal muscle.

Its subcellular location is the cell projection. It localises to the ruffle. The protein localises to the cytoplasmic vesicle. Its function is as follows. Guanine nucleotide exchange factor (GEF) for RAB5A and RAB22A that activates RAB5A and RAB22A by exchanging bound GDP for free GTP. Plays a role in endocytosis via its role in activating Rab family members. The polypeptide is Ras and Rab interactor-like protein (Rinl) (Mus musculus (Mouse)).